The following is a 418-amino-acid chain: Gamma-glutamyl phosphate reductase (418 aa).

It belongs to the gamma-glutamyl phosphate reductase family.

Its subcellular location is the cytoplasm. It catalyses the reaction L-glutamate 5-semialdehyde + phosphate + NADP(+) = L-glutamyl 5-phosphate + NADPH + H(+). It functions in the pathway amino-acid biosynthesis; L-proline biosynthesis; L-glutamate 5-semialdehyde from L-glutamate: step 2/2. Its function is as follows. Catalyzes the NADPH-dependent reduction of L-glutamate 5-phosphate into L-glutamate 5-semialdehyde and phosphate. The product spontaneously undergoes cyclization to form 1-pyrroline-5-carboxylate. The polypeptide is Gamma-glutamyl phosphate reductase (Clostridium acetobutylicum (strain ATCC 824 / DSM 792 / JCM 1419 / IAM 19013 / LMG 5710 / NBRC 13948 / NRRL B-527 / VKM B-1787 / 2291 / W)).